The following is a 557-amino-acid chain: Potassium-transporting ATPase potassium-binding subunit (557 aa).

Transmembrane regions (helical) follow at residues Leu-4–Pro-24, Thr-61–Leu-81, Gly-131–Val-151, Leu-174–Val-194, Leu-253–Val-273, Leu-280–Ala-300, Gly-375–Gly-395, Cys-412–Leu-432, Leu-483–Phe-503, and Leu-528–Ile-548.

The protein belongs to the KdpA family. The system is composed of three essential subunits: KdpA, KdpB and KdpC.

It is found in the cell membrane. In terms of biological role, part of the high-affinity ATP-driven potassium transport (or Kdp) system, which catalyzes the hydrolysis of ATP coupled with the electrogenic transport of potassium into the cytoplasm. This subunit binds the extracellular potassium ions and delivers the ions to the membrane domain of KdpB through an intramembrane tunnel. The sequence is that of Potassium-transporting ATPase potassium-binding subunit from Kineococcus radiotolerans (strain ATCC BAA-149 / DSM 14245 / SRS30216).